Reading from the N-terminus, the 1485-residue chain is Chromosome partition protein MukB (1485 aa).

34–41 contributes to the ATP binding site; it reads GGNGAGKS. 6 coiled-coil regions span residues 337–480, 509–605, 780–805, 835–915, 977–1116, and 1210–1235; these read LNLV…QAYQ, QHLA…PVWL, RAAR…ATLS, EAEI…IQQH, GMLT…AKAG, and EAIE…KLAI. The tract at residues 666–783 is flexible hinge; the sequence is PSGAEDARLI…EVPLFGRAAR (118 aa).

It belongs to the SMC family. MukB subfamily. In terms of assembly, homodimerization via its hinge domain. Binds to DNA via its C-terminal region. Interacts, and probably forms a ternary complex, with MukE and MukF via its C-terminal region. The complex formation is stimulated by calcium or magnesium. Interacts with tubulin-related protein FtsZ.

The protein localises to the cytoplasm. The protein resides in the nucleoid. In terms of biological role, plays a central role in chromosome condensation, segregation and cell cycle progression. Functions as a homodimer, which is essential for chromosome partition. Involved in negative DNA supercoiling in vivo, and by this means organize and compact chromosomes. May achieve or facilitate chromosome segregation by condensation DNA from both sides of a centrally located replisome during cell division. The sequence is that of Chromosome partition protein MukB from Yersinia pseudotuberculosis serotype O:1b (strain IP 31758).